The primary structure comprises 145 residues: CBS domain-containing protein DDB_G0289609 (145 aa).

2 CBS domains span residues 9 to 66 (MSKS…FLPE) and 84 to 141 (MKQN…LEPV).

This Dictyostelium discoideum (Social amoeba) protein is CBS domain-containing protein DDB_G0289609.